The sequence spans 192 residues: MERLILASNSPRRKEILQNLHVKFDIIVSDVDEVFNEKDHPAKIVETLAYLKAEDVANRIDRDAIIIGADTIVVKNGIIGKPKNKQDARDILRTLSGDVHEVITGIVVLDTSSGYTVIDHVVTEVYMKKITDEEIERYIATGEPMDKAGAYGIQGRAAVFVEKIVGDYYNVVGLPICKLGEVLHKHFHINLL.

The active-site Proton acceptor is D70.

Belongs to the Maf family. YhdE subfamily. Requires a divalent metal cation as cofactor.

The protein localises to the cytoplasm. The enzyme catalyses dTTP + H2O = dTMP + diphosphate + H(+). The catalysed reaction is UTP + H2O = UMP + diphosphate + H(+). Its function is as follows. Nucleoside triphosphate pyrophosphatase that hydrolyzes dTTP and UTP. May have a dual role in cell division arrest and in preventing the incorporation of modified nucleotides into cellular nucleic acids. The chain is dTTP/UTP pyrophosphatase from Alkaliphilus metalliredigens (strain QYMF).